A 299-amino-acid polypeptide reads, in one-letter code: Syntenin-1 (299 aa).

S2 is subject to N-acetylserine. Positions S2–G103 are interaction with PDCD6IP. Short sequence motifs (LYPX(n)L motif) lie at residues L3–L7, L46–L50, and L50–L54. Residue S6 is modified to Phosphoserine. Y47 carries the phosphotyrosine modification. 2 PDZ domains span residues E115–R194 and T199–T273. K251–D252 is an a 1,2-diacyl-sn-glycero-3-phospho-(1D-myo-inositol-4,5-bisphosphate) binding site.

Monomer and homodimer. Interacts with SDC1, SDC2, SDC3, SDC4, NRXN2, EPHA7, EPHB1, NF2 isoform 1, TGFA, IL5RA, NFASC, SDCBP2 and PTPRJ. Interacts with PDCD6IP. Forms a complex with PDCD6IP and SDC2. Interacts (via C-terminus) with TGFBR1. Binds to FZD7; this interaction is increased by inositol trisphosphate (IP3). Interacts with SMO. Phosphorylated on tyrosine residues.

The protein resides in the cell junction. It localises to the focal adhesion. Its subcellular location is the adherens junction. It is found in the cell membrane. The protein localises to the endoplasmic reticulum membrane. The protein resides in the nucleus. It localises to the melanosome. Its subcellular location is the cytoplasm. It is found in the cytosol. The protein localises to the cytoskeleton. The protein resides in the secreted. It localises to the extracellular exosome. Its subcellular location is the membrane raft. Multifunctional adapter protein involved in diverse array of functions including trafficking of transmembrane proteins, neuro and immunomodulation, exosome biogenesis, and tumorigenesis. Positively regulates TGFB1-mediated SMAD2/3 activation and TGFB1-induced epithelial-to-mesenchymal transition (EMT) and cell migration in various cell types. May increase TGFB1 signaling by enhancing cell-surface expression of TGFR1 by preventing the interaction between TGFR1 and CAV1 and subsequent CAV1-dependent internalization and degradation of TGFR1. In concert with SDC1/4 and PDCD6IP, regulates exosome biogenesis. Regulates migration, growth, proliferation, and cell cycle progression in a variety of cancer types. In adherens junctions may function to couple syndecans to cytoskeletal proteins or signaling components. Seems to couple transcription factor SOX4 to the IL-5 receptor (IL5RA). May also play a role in vesicular trafficking. Seems to be required for the targeting of TGFA to the cell surface in the early secretory pathway. This chain is Syntenin-1 (Sdcbp), found in Mus musculus (Mouse).